Consider the following 371-residue polypeptide: Cysteine proteinase EP-B 1 (371 aa).

An N-terminal signal peptide occupies residues 1–28; the sequence is MGLLSKKLLVASMVAAVLAVAAVELCSA. Residues 29–133 constitute a propeptide, activation peptide; it reads IPMEDKDLES…FMYAALNVSD (105 aa). An N-linked (GlcNAc...) asparagine glycan is attached at asparagine 130. Cystine bridges form between cysteine 155–cysteine 197, cysteine 189–cysteine 230, and cysteine 291–cysteine 343. Cysteine 158 is a catalytic residue. Active-site residues include histidine 297 and asparagine 318.

Belongs to the peptidase C1 family.

The chain is Cysteine proteinase EP-B 1 from Hordeum vulgare (Barley).